The chain runs to 94 residues: Pyrimidine/purine nucleoside phosphorylase (94 aa).

This sequence belongs to the nucleoside phosphorylase PpnP family.

It carries out the reaction a purine D-ribonucleoside + phosphate = a purine nucleobase + alpha-D-ribose 1-phosphate. It catalyses the reaction adenosine + phosphate = alpha-D-ribose 1-phosphate + adenine. The catalysed reaction is cytidine + phosphate = cytosine + alpha-D-ribose 1-phosphate. The enzyme catalyses guanosine + phosphate = alpha-D-ribose 1-phosphate + guanine. It carries out the reaction inosine + phosphate = alpha-D-ribose 1-phosphate + hypoxanthine. It catalyses the reaction thymidine + phosphate = 2-deoxy-alpha-D-ribose 1-phosphate + thymine. The catalysed reaction is uridine + phosphate = alpha-D-ribose 1-phosphate + uracil. The enzyme catalyses xanthosine + phosphate = alpha-D-ribose 1-phosphate + xanthine. In terms of biological role, catalyzes the phosphorolysis of diverse nucleosides, yielding D-ribose 1-phosphate and the respective free bases. Can use uridine, adenosine, guanosine, cytidine, thymidine, inosine and xanthosine as substrates. Also catalyzes the reverse reactions. This chain is Pyrimidine/purine nucleoside phosphorylase, found in Aeromonas salmonicida (strain A449).